A 224-amino-acid chain; its full sequence is MINPVTNTQGVSPINTKYAEHVVKNIYPKIKHDYFNESPNIYDKKYISGITRGVAELKQEEFVNEKARRFSYMKTMYSVCPEAFEPISRNEASTPEGSWLTVISGKRPMGQFSVDSLYNPDLHALCELPDICCKIFPKENNDFLYIVVVYRNDSPLGEQRANRFIELYNIKRDIMQELNYELPELKAVKSEMIIAREMGEIFSYMPGEIDSYMKYINNKLSKIE.

Residues 49–52 are interaction with host proteins TAB2, TAB3 and ZRANB3; the sequence is GITR. 6 residues coordinate S-adenosyl-L-methionine: A92, S98, R107, Q111, Y204, and E208.

It belongs to the NleE/OspZ family. As to quaternary structure, monomer.

It localises to the secreted. The protein localises to the host nucleus. It carries out the reaction L-cysteinyl-[protein] + S-adenosyl-L-methionine = S-methyl-L-cysteinyl-[protein] + S-adenosyl-L-homocysteine + H(+). In terms of biological role, cysteine methyltransferase effector that inhibits host cell NF-kappa-B activation by preventing nuclear translocation of host protein RELA/p65. Acts by mediating cysteine methylation of host proteins TAB2 and TAB3: methylation of a conserved cysteine residue of the RanBP2-type zinc finger (NZF) of TAB2 and TAB3 disrupts zinc-binding, thereby inactivating the ubiquitin chain-binding activity of TAB2 and TAB3, leading to NF-kappa-B inactivation. Also mediates cysteine methylation of host protein ZRANB3, inactivating its ability to bind ubiquitin chains. In Escherichia coli O127:H6 (strain E2348/69 / EPEC), this protein is Cysteine S-methyltransferase NleE.